The chain runs to 191 residues: Guanylate kinase (191 aa).

One can recognise a Guanylate kinase-like domain in the interval 9-187; it reads GQLIVITGPS…SLIALETAIF (179 aa). Residue 16-23 coordinates ATP; it reads GPSGVGKG.

Belongs to the guanylate kinase family.

The protein resides in the cytoplasm. The enzyme catalyses GMP + ATP = GDP + ADP. Functionally, essential for recycling GMP and indirectly, cGMP. This chain is Guanylate kinase, found in Thermosynechococcus vestitus (strain NIES-2133 / IAM M-273 / BP-1).